Reading from the N-terminus, the 255-residue chain is Accessory gland-specific peptide 26Aa (255 aa).

The N-terminal stretch at 1–18 (MNLILLCSQILLLLFTVA) is a signal peptide. Residues 86–110 (PINNSKSRKNSSTLPSQILTDKPNQ) are disordered. Polar residues predominate over residues 87–110 (INNSKSRKNSSTLPSQILTDKPNQ). N-linked (GlcNAc...) asparagine glycans are attached at residues N88, N95, and N136. Disordered regions lie at residues 177 to 196 (NAQNARKSTKSCKKRPSKDI) and 235 to 255 (NNPATDVPTGKSPSEGNPSTT). Basic residues predominate over residues 183–192 (KSTKSCKKRP). The segment covering 245–255 (KSPSEGNPSTT) has biased composition (polar residues).

In terms of processing, it undergoes several cleavages as it is secreted and it is further processed in the recipient female. In terms of tissue distribution, main cells of the accessory glands of males.

It is found in the secreted. The protein resides in the extracellular space. This protein is transferred from male to female's hemolymph during mating, affecting egglaying and behavior after mating. This Drosophila sechellia (Fruit fly) protein is Accessory gland-specific peptide 26Aa (Acp26Aa).